The following is a 116-amino-acid chain: Protein Rev (116 aa).

The residue at position 5 (S5) is a Phosphoserine; by host CK2. The segment at 18–26 (YIKILYQSN) is homomultimerization. Residues 34–50 (TRKARRNRRRRWRARQR) carry the Nuclear localization signal and RNA-binding (RRE) motif. The Nuclear export signal and binding to XPO1 signature appears at 73–84 (LQLPLLEKLHIN). Residues 90–116 (GQGTEKGVGSPQISVESRAVLGSGTKE) are disordered. A Phosphoserine; by host modification is found at S99.

The protein belongs to the HIV-1 REV protein family. As to quaternary structure, homomultimer; when bound to the RRE. Multimeric assembly is essential for activity and may involve XPO1. Binds to human KPNB1, XPO1, TNPO1, RANBP5 and IPO7. Interacts with the viral Integrase. Interacts with human KHDRBS1. Interacts with human NAP1; this interaction decreases Rev multimerization and stimulates its activity. Interacts with human DEAD-box helicases DDX3 and DDX24; these interactions may serve for viral RNA export to the cytoplasm and packaging, respectively. Interacts with human PSIP1; this interaction may inhibit HIV-1 DNA integration by promoting dissociation of the Integrase-LEDGF/p75 complex. Post-translationally, asymmetrically arginine dimethylated at one site by host PRMT6. Methylation impairs the RNA-binding activity and export of viral RNA from the nucleus to the cytoplasm. In terms of processing, phosphorylated by protein kinase CK2. Presence of, and maybe binding to the N-terminus of the regulatory beta subunit of CK2 is necessary for CK2-mediated Rev's phosphorylation.

The protein resides in the host nucleus. It localises to the host nucleolus. It is found in the host cytoplasm. Functionally, escorts unspliced or incompletely spliced viral pre-mRNAs (late transcripts) out of the nucleus of infected cells. These pre-mRNAs carry a recognition sequence called Rev responsive element (RRE) located in the env gene, that is not present in fully spliced viral mRNAs (early transcripts). This function is essential since most viral proteins are translated from unspliced or partially spliced pre-mRNAs which cannot exit the nucleus by the pathway used by fully processed cellular mRNAs. Rev itself is translated from a fully spliced mRNA that readily exits the nucleus. Rev's nuclear localization signal (NLS) binds directly to KPNB1/Importin beta-1 without previous binding to KPNA1/Importin alpha-1. KPNB1 binds to the GDP bound form of RAN (Ran-GDP) and targets Rev to the nucleus. In the nucleus, the conversion from Ran-GDP to Ran-GTP dissociates Rev from KPNB1 and allows Rev's binding to the RRE in viral pre-mRNAs. Rev multimerization on the RRE via cooperative assembly exposes its nuclear export signal (NES) to the surface. Rev can then form a complex with XPO1/CRM1 and Ran-GTP, leading to nuclear export of the complex. Conversion from Ran-GTP to Ran-GDP mediates dissociation of the Rev/RRE/XPO1/RAN complex, so that Rev can return to the nucleus for a subsequent round of export. Beside KPNB1, also seems to interact with TNPO1/Transportin-1, RANBP5/IPO5 and IPO7/RANBP7 for nuclear import. The nucleoporin-like HRB/RIP is an essential cofactor that probably indirectly interacts with Rev to release HIV RNAs from the perinuclear region to the cytoplasm. This is Protein Rev from Human immunodeficiency virus type 1 group M subtype F2 (isolate MP257) (HIV-1).